A 448-amino-acid polypeptide reads, in one-letter code: Protein chibby homolog 2 (448 aa).

Phosphoserine occurs at positions 41, 86, 89, 97, 124, 144, 148, and 150. Positions 163-198 (AKEFVLQEENKSLREENKALREENRMLRKENKILQV) form a coiled coil. A disordered region spans residues 206-226 (SLGREESRPPSPLPQKDSASL). A phosphoserine mark is found at Ser-212 and Ser-225. Residues 242-267 (KEDSTLQLLREENRALQQLLEQKQAY) are a coiled coil. The interval 270–321 (QTEDAAAPAEESKPAPSPHEEPCSPGLLQDQGSGLSSHFEEPRGPPAPQEDS) is disordered. A compositionally biased stretch (basic and acidic residues) spans 279–291 (EESKPAPSPHEEP). Phosphoserine occurs at positions 335 and 338. A coiled-coil region spans residues 356-414 (LQLLREMRQALQALLKENRLLQEENRTLQVLRAEHRGFQEENKALWENNKLKLQQKLVI).

It belongs to the chibby family. SPERT subfamily. Homodimer. Binds to NEK1.

The chain is Protein chibby homolog 2 (CBY2) from Macaca fascicularis (Crab-eating macaque).